Here is a 420-residue protein sequence, read N- to C-terminus: MDKLVIEGGYPLSGEVVVSGAKNAALPILCASLLSAEPVHLENVPDLQDVRTMLKLLGQMGVQIESGDGRVSLNASKVDNLVAPYEMVKTMRASILVLGPLVARFGHARVSLPGGCAIGARPVDQHIKGLQAMGAEITIEHGFIEARAKRLKGARIVTDMITVTGTENLLMAAVLAEGETVIENAAREPEVGDLAHLLVAMGAKIEGIGTDRLVIQGVDKLHGAKHTVIPDRIEAGTFLCAVAAAGGDVTLRKVRPLILEAVTEKLREAGVTVEEGDDWMRVRMDKRPSAVTFRTSEYPAFPTDMQAQFMALNTIATGTSQVVETIFENRFMHVQELNRLGANITIDGNTALVTGVEQLSGAKVMATDLRASASLVIAALRADGETLIDRIYHLDRGYDRMETKLTALGAKVRRVSGSQA.

Lys-22–Asn-23 is a binding site for phosphoenolpyruvate. Arg-92 contributes to the UDP-N-acetyl-alpha-D-glucosamine binding site. The Proton donor role is filled by Cys-116. Position 116 is a 2-(S-cysteinyl)pyruvic acid O-phosphothioketal (Cys-116). Residues Arg-121–Gln-125, Asp-304, and Ile-326 contribute to the UDP-N-acetyl-alpha-D-glucosamine site.

Belongs to the EPSP synthase family. MurA subfamily.

It is found in the cytoplasm. It catalyses the reaction phosphoenolpyruvate + UDP-N-acetyl-alpha-D-glucosamine = UDP-N-acetyl-3-O-(1-carboxyvinyl)-alpha-D-glucosamine + phosphate. The protein operates within cell wall biogenesis; peptidoglycan biosynthesis. Cell wall formation. Adds enolpyruvyl to UDP-N-acetylglucosamine. In Paraburkholderia phytofirmans (strain DSM 17436 / LMG 22146 / PsJN) (Burkholderia phytofirmans), this protein is UDP-N-acetylglucosamine 1-carboxyvinyltransferase.